Here is a 113-residue protein sequence, read N- to C-terminus: Transcription initiation factor IIA subunit 2 (113 aa).

It belongs to the TFIIA subunit 2 family. In terms of assembly, TFIIA is a heterodimer of the large unprocessed subunit 1 and a small subunit gamma. It was originally believed to be a heterotrimer of an alpha, a beta and a gamma subunit.

The protein resides in the nucleus. In terms of biological role, TFIIA is a component of the transcription machinery of RNA polymerase II and plays an important role in transcriptional activation. TFIIA in a complex with TBP mediates transcriptional activity. This Caenorhabditis elegans protein is Transcription initiation factor IIA subunit 2.